The chain runs to 577 residues: Arginine--tRNA ligase (577 aa).

The 'HIGH' region motif lies at 122–132 (PNVAKEMHVGH).

Belongs to the class-I aminoacyl-tRNA synthetase family. Monomer.

Its subcellular location is the cytoplasm. The catalysed reaction is tRNA(Arg) + L-arginine + ATP = L-arginyl-tRNA(Arg) + AMP + diphosphate. The polypeptide is Arginine--tRNA ligase (Escherichia coli O8 (strain IAI1)).